The primary structure comprises 202 residues: Putative pre-16S rRNA nuclease (202 aa).

Disordered stretches follow at residues 1 to 27 (MSGS…GVRI) and 170 to 202 (GCAA…SDER). Residues 9–20 (GDSRPGDSRPGD) are compositionally biased toward basic and acidic residues.

The protein belongs to the YqgF nuclease family.

The protein localises to the cytoplasm. Functionally, could be a nuclease involved in processing of the 5'-end of pre-16S rRNA. The sequence is that of Putative pre-16S rRNA nuclease from Frankia casuarinae (strain DSM 45818 / CECT 9043 / HFP020203 / CcI3).